The chain runs to 305 residues: UDP-3-O-acyl-N-acetylglucosamine deacetylase (305 aa).

Zn(2+)-binding residues include His-79, His-238, and Asp-242. Residue His-265 is the Proton donor of the active site.

It belongs to the LpxC family. Requires Zn(2+) as cofactor.

It carries out the reaction a UDP-3-O-[(3R)-3-hydroxyacyl]-N-acetyl-alpha-D-glucosamine + H2O = a UDP-3-O-[(3R)-3-hydroxyacyl]-alpha-D-glucosamine + acetate. It participates in glycolipid biosynthesis; lipid IV(A) biosynthesis; lipid IV(A) from (3R)-3-hydroxytetradecanoyl-[acyl-carrier-protein] and UDP-N-acetyl-alpha-D-glucosamine: step 2/6. Catalyzes the hydrolysis of UDP-3-O-myristoyl-N-acetylglucosamine to form UDP-3-O-myristoylglucosamine and acetate, the committed step in lipid A biosynthesis. The sequence is that of UDP-3-O-acyl-N-acetylglucosamine deacetylase from Colwellia psychrerythraea (strain 34H / ATCC BAA-681) (Vibrio psychroerythus).